The primary structure comprises 197 residues: Imidazoleglycerol-phosphate dehydratase (197 aa).

The protein belongs to the imidazoleglycerol-phosphate dehydratase family.

The protein localises to the cytoplasm. The enzyme catalyses D-erythro-1-(imidazol-4-yl)glycerol 3-phosphate = 3-(imidazol-4-yl)-2-oxopropyl phosphate + H2O. It participates in amino-acid biosynthesis; L-histidine biosynthesis; L-histidine from 5-phospho-alpha-D-ribose 1-diphosphate: step 6/9. In Pseudomonas putida (strain GB-1), this protein is Imidazoleglycerol-phosphate dehydratase.